Reading from the N-terminus, the 475-residue chain is U3 small nucleolar RNA-interacting protein 2 (475 aa).

The segment at 1–75 (MSATAAARKR…EEEEELEETA (75 aa)) is disordered. The short motif at 8-40 (RKRGKPASGAGAGAGAGKRRRKADSAGDRGKSK) is the Nuclear localization signal element. An Omega-N-methylarginine modification is found at Arg10. Residues Lys12 and Lys25 each carry the N6-acetyllysine modification. A phosphoserine mark is found at Ser50, Ser51, Ser53, and Ser57. The segment covering 65–74 (EEEEEELEET) has biased composition (acidic residues). Lys113 is covalently cross-linked (Glycyl lysine isopeptide (Lys-Gly) (interchain with G-Cter in SUMO2)). WD repeat units lie at residues 144–183 (GHQL…KLHV), 197–236 (GHSS…HLYT), 239–278 (GHRD…YVET), 281–320 (GHQD…QLVF), 322–360 (GHQG…PLAL), 374–413 (EQPF…RQLD), and 419–460 (PLVG…NSVC).

Belongs to the WD repeat RRP9 family. As to quaternary structure, interacts specifically with the U3 small nucleolar RNA (U3 snoRNA). Binds a sub-fragment of the U3 snoRNA surrounding the B/C motif (3UBC). This association with the U3BC RNA is dependent on the binding of a protein called 15.5K to the box B/C motif. The association of the protein with the U3BC RNA was found to be also dependent on a conserved RNA structure that flanks the box B/C motif. Part of the small subunit (SSU) processome, composed of more than 70 proteins and the RNA chaperone small nucleolar RNA (snoRNA) U3. In terms of processing, acetylation at Lys-12 and Lys-25 by KAT2B/PCAF under stress impairs pre-rRNA processing. Deacetylation by SIRT7 enhances RRP9-binding to U3 snoRNA, which is a prerequisite for pre-rRNA processing.

The protein localises to the nucleus. The protein resides in the nucleolus. Functionally, component of a nucleolar small nuclear ribonucleoprotein particle (snoRNP) thought to participate in the processing and modification of pre-ribosomal RNA (pre-rRNA). Part of the small subunit (SSU) processome, first precursor of the small eukaryotic ribosomal subunit. During the assembly of the SSU processome in the nucleolus, many ribosome biogenesis factors, an RNA chaperone and ribosomal proteins associate with the nascent pre-rRNA and work in concert to generate RNA folding, modifications, rearrangements and cleavage as well as targeted degradation of pre-ribosomal RNA by the RNA exosome. This chain is U3 small nucleolar RNA-interacting protein 2, found in Homo sapiens (Human).